The following is a 359-amino-acid chain: Peptide chain release factor 1 (359 aa).

Q233 is modified (N5-methylglutamine).

This sequence belongs to the prokaryotic/mitochondrial release factor family. In terms of processing, methylated by PrmC. Methylation increases the termination efficiency of RF1.

The protein resides in the cytoplasm. Functionally, peptide chain release factor 1 directs the termination of translation in response to the peptide chain termination codons UAG and UAA. The protein is Peptide chain release factor 1 of Cytophaga hutchinsonii (strain ATCC 33406 / DSM 1761 / CIP 103989 / NBRC 15051 / NCIMB 9469 / D465).